The following is a 350-amino-acid chain: tRNA N6-adenosine threonylcarbamoyltransferase (350 aa).

Positions 109 and 113 each coordinate Fe cation. Substrate-binding positions include 136–140, D169, G182, D186, and N284; that span reads TVSGG. D312 is a binding site for Fe cation.

The protein belongs to the KAE1 / TsaD family. It depends on Fe(2+) as a cofactor.

It localises to the cytoplasm. It catalyses the reaction L-threonylcarbamoyladenylate + adenosine(37) in tRNA = N(6)-L-threonylcarbamoyladenosine(37) in tRNA + AMP + H(+). In terms of biological role, required for the formation of a threonylcarbamoyl group on adenosine at position 37 (t(6)A37) in tRNAs that read codons beginning with adenine. Is involved in the transfer of the threonylcarbamoyl moiety of threonylcarbamoyl-AMP (TC-AMP) to the N6 group of A37, together with TsaE and TsaB. TsaD likely plays a direct catalytic role in this reaction. This chain is tRNA N6-adenosine threonylcarbamoyltransferase, found in Pelodictyon phaeoclathratiforme (strain DSM 5477 / BU-1).